A 748-amino-acid polypeptide reads, in one-letter code: SNF-related serine/threonine-protein kinase (748 aa).

The region spanning 16 to 269 (YDLDKTLGRG…LEEIESHPWL (254 aa)) is the Protein kinase domain. ATP is bound by residues 22-30 (LGRGHFAVV) and lysine 45. Aspartate 139 (proton acceptor) is an active-site residue. A Phosphoserine modification is found at serine 162. Threonine 173 carries the phosphothreonine; by LKB1 modification. The UBA domain maps to 291-334 (SEEEHNSIIQRMVLGDIADRDAIVEALETNRYNHITATYFLLAE). Serine 362, serine 390, serine 482, serine 495, and serine 518 each carry phosphoserine. The disordered stretch occupies residues 383–415 (SHATVPQSPARAGDNVLNGHRSKGLCDPAKKDE). A compositionally biased stretch (acidic residues) spans 491–503 (EEGESDDEFDMDE). Residues 491 to 640 (EEGESDDEFD…SPSPASASAA (150 aa)) are disordered. Residues 522 to 532 (VHKRYHRRKSQ) show a composition bias toward basic residues. Residues 533 to 542 (GRGSSCSSSE) show a composition bias toward low complexity. Arginine 534 is subject to Omega-N-methylarginine. Basic and acidic residues predominate over residues 549-558 (ESRRRLDKDS). Composition is skewed to gly residues over residues 575–592 (GSEGDGGGQSKPSSGGGV) and 600–614 (QGTGGGSQGGSGGTP). Serine 606 is modified (phosphoserine). Low complexity predominate over residues 629 to 640 (SSSPSPASASAA).

It belongs to the protein kinase superfamily. CAMK Ser/Thr protein kinase family. Requires Mg(2+) as cofactor. Post-translationally, autophosphorylated. Phosphorylation on Thr-173 by STK11/LKB1 in complex with STE20-related adapter-alpha (STRADA) pseudo kinase and CAB39. In terms of tissue distribution, ubiquitously expressed in all tissues examined.

Its subcellular location is the nucleus. It carries out the reaction L-seryl-[protein] + ATP = O-phospho-L-seryl-[protein] + ADP + H(+). The catalysed reaction is L-threonyl-[protein] + ATP = O-phospho-L-threonyl-[protein] + ADP + H(+). Its activity is regulated as follows. Activated by phosphorylation on Thr-173. Functionally, may play a role in hematopoietic cell proliferation or differentiation. Potential mediator of neuronal apoptosis. The chain is SNF-related serine/threonine-protein kinase from Mus musculus (Mouse).